The sequence spans 103 residues: Large ribosomal subunit protein bL21 (103 aa).

Belongs to the bacterial ribosomal protein bL21 family. As to quaternary structure, part of the 50S ribosomal subunit. Contacts protein L20.

Its function is as follows. This protein binds to 23S rRNA in the presence of protein L20. This Actinobacillus succinogenes (strain ATCC 55618 / DSM 22257 / CCUG 43843 / 130Z) protein is Large ribosomal subunit protein bL21.